Here is an 89-residue protein sequence, read N- to C-terminus: Elongation factor 1-beta (89 aa).

It belongs to the EF-1-beta/EF-1-delta family.

Promotes the exchange of GDP for GTP in EF-1-alpha/GDP, thus allowing the regeneration of EF-1-alpha/GTP that could then be used to form the ternary complex EF-1-alpha/GTP/AAtRNA. This is Elongation factor 1-beta from Methanococcus aeolicus (strain ATCC BAA-1280 / DSM 17508 / OCM 812 / Nankai-3).